Here is a 91-residue protein sequence, read N- to C-terminus: MKPNIHPDNYRTVLFFDSSANEGWLIRSCAGTHGKTMVWTDGKEYPLFSLDTSSSSHPVYTGKQRNVNTEGRASKFNQRFQSVMSSFRKDK.

Belongs to the bacterial ribosomal protein bL31 family. Type B subfamily. As to quaternary structure, part of the 50S ribosomal subunit.

This is Large ribosomal subunit protein bL31B from Neisseria gonorrhoeae (strain NCCP11945).